An 899-amino-acid chain; its full sequence is Translation initiation factor IF-2 (899 aa).

2 disordered regions span residues 94 to 167 (TFTK…VVVK) and 259 to 309 (FNQE…HGFE). Residues 107 to 121 (AKARQETEERTRPQE) are compositionally biased toward basic and acidic residues. The span at 147–164 (RAAQQKETAKTTSTTTEV) shows a compositional bias: low complexity. The tr-type G domain occupies 399 to 568 (TRPPVVTIMG…LIQSELMELK (170 aa)). Residues 408–415 (GHVDHGKT) form a G1 region. 408 to 415 (GHVDHGKT) lines the GTP pocket. The tract at residues 433–437 (GITQH) is G2. A G3 region spans residues 454–457 (DTPG). Residues 454–458 (DTPGH) and 508–511 (NKMD) contribute to the GTP site. The interval 508–511 (NKMD) is G4. The tract at residues 544 to 546 (SAH) is G5.

Belongs to the TRAFAC class translation factor GTPase superfamily. Classic translation factor GTPase family. IF-2 subfamily.

It is found in the cytoplasm. In terms of biological role, one of the essential components for the initiation of protein synthesis. Protects formylmethionyl-tRNA from spontaneous hydrolysis and promotes its binding to the 30S ribosomal subunits. Also involved in the hydrolysis of GTP during the formation of the 70S ribosomal complex. The chain is Translation initiation factor IF-2 from Acinetobacter baylyi (strain ATCC 33305 / BD413 / ADP1).